Here is a 149-residue protein sequence, read N- to C-terminus: Large ribosomal subunit protein eL19 (149 aa).

The disordered stretch occupies residues 45-94 (VADGTIDAEDTQGNSRGRARERDAKESYGHKKGAGSRKGKAGARQNEKRE). Basic and acidic residues predominate over residues 62–73 (RARERDAKESYG). Basic residues predominate over residues 74–85 (HKKGAGSRKGKA).

Belongs to the eukaryotic ribosomal protein eL19 family. Part of the 50S ribosomal subunit.

In terms of biological role, binds to the 23S rRNA. This is Large ribosomal subunit protein eL19 from Halobacterium salinarum (strain ATCC 700922 / JCM 11081 / NRC-1) (Halobacterium halobium).